The following is a 338-amino-acid chain: Fructose-1,6-bisphosphatase 1 (338 aa).

Alanine 2 is modified (N-acetylalanine). AMP contacts are provided by residues 18–22 (VMEEG) and 28–32 (TGEMT). Mg(2+) is bound by residues aspartate 69 and glutamate 98. 113–114 (KY) provides a ligand contact to AMP. Mg(2+) is bound by residues aspartate 119, leucine 121, and aspartate 122. Residue 122–125 (DGSS) coordinates substrate. Arginine 141 serves as a coordination point for AMP. Residue lysine 151 is modified to N6-succinyllysine. Residues 213 to 216 (NEGY), 244 to 249 (RYVGSM), tyrosine 265, and 275 to 277 (KLR) contribute to the substrate site. Tyrosine 216, tyrosine 245, and tyrosine 265 each carry phosphotyrosine. Glutamate 281 contributes to the Mg(2+) binding site.

The protein belongs to the FBPase class 1 family. As to quaternary structure, homotetramer. Mg(2+) serves as cofactor.

The enzyme catalyses beta-D-fructose 1,6-bisphosphate + H2O = beta-D-fructose 6-phosphate + phosphate. It functions in the pathway carbohydrate biosynthesis; gluconeogenesis. Its activity is regulated as follows. Subject to complex allosteric regulation. The enzyme can assume an active R-state, or an inactive T-state. Intermediate conformations may exist. AMP acts as an allosteric inhibitor. AMP binding affects the turnover of bound substrate and not the affinity for substrate. Fructose 2,6-bisphosphate acts as a competitive inhibitor. Fructose 2,6-bisphosphate and AMP have synergistic effects. In terms of biological role, catalyzes the hydrolysis of fructose 1,6-bisphosphate to fructose 6-phosphate in the presence of divalent cations, acting as a rate-limiting enzyme in gluconeogenesis. Plays a role in regulating glucose sensing and insulin secretion of pancreatic beta-cells. Appears to modulate glycerol gluconeogenesis in liver. Important regulator of appetite and adiposity; increased expression of the protein in liver after nutrient excess increases circulating satiety hormones and reduces appetite-stimulating neuropeptides and thus seems to provide a feedback mechanism to limit weight gain. The polypeptide is Fructose-1,6-bisphosphatase 1 (FBP1) (Oryctolagus cuniculus (Rabbit)).